A 326-amino-acid polypeptide reads, in one-letter code: NAD kinase (326 aa).

The active-site Proton acceptor is Asp-93. Residues 93–94 (DG), Arg-98, 171–172 (NE), Arg-182, Asp-201, and 212–217 (TAHAFS) contribute to the NAD(+) site.

Belongs to the NAD kinase family. The cofactor is a divalent metal cation.

It localises to the cytoplasm. The enzyme catalyses NAD(+) + ATP = ADP + NADP(+) + H(+). Involved in the regulation of the intracellular balance of NAD and NADP, and is a key enzyme in the biosynthesis of NADP. Catalyzes specifically the phosphorylation on 2'-hydroxyl of the adenosine moiety of NAD to yield NADP. The polypeptide is NAD kinase (Thermobifida fusca (strain YX)).